We begin with the raw amino-acid sequence, 195 residues long: PBAN-type neuropeptides (195 aa).

The signal sequence occupies residues 1–33 (MIGFAVFSSFNRFTTIFVCVLLCVVYLLSYASG). The propeptide occupies 34–63 (EYDGRDSSSGSNNDRAPSNEFGSCTDGKCI). L80 is modified (leucine amide). Positions 86-117 (ADRKPEINSDIEAFANAFEEPHWAIVTIPETE) are excised as a propeptide. Q120 carries the pyrrolidone carboxylic acid modification. L128 is subject to Leucine amide. Residues 131–153 (ESGEDYFSYGFPKDQEELYTEEQ) constitute a propeptide that is removed on maturation. Leucine amide is present on residues L163 and L175. The propeptide occupies 178 to 195 (QLHNIVDKPRQNFNDPRF).

Belongs to the pyrokinin family.

The protein resides in the secreted. Its function is as follows. A hormone that controls sex pheromone production in females and pheromone responsiveness in male. Also mediates visceral muscle contractile activity (myotropic activity). The sequence is that of PBAN-type neuropeptides from Apis mellifera (Honeybee).